The sequence spans 942 residues: Valine--tRNA ligase (942 aa).

A 'HIGH' region motif is present at residues 43–53 (PNVTGTLHMGH). The 'KMSKS' region motif lies at 551–555 (KMSKS). Lys554 contacts ATP. Residues 876–942 (EGLVDLDAER…AGLREQRAKL (67 aa)) are a coiled coil.

Belongs to the class-I aminoacyl-tRNA synthetase family. ValS type 1 subfamily. Monomer.

The protein localises to the cytoplasm. The enzyme catalyses tRNA(Val) + L-valine + ATP = L-valyl-tRNA(Val) + AMP + diphosphate. Catalyzes the attachment of valine to tRNA(Val). As ValRS can inadvertently accommodate and process structurally similar amino acids such as threonine, to avoid such errors, it has a 'posttransfer' editing activity that hydrolyzes mischarged Thr-tRNA(Val) in a tRNA-dependent manner. The polypeptide is Valine--tRNA ligase (Stenotrophomonas maltophilia (strain R551-3)).